We begin with the raw amino-acid sequence, 268 residues long: Tryptophan synthase alpha chain (268 aa).

Active-site proton acceptor residues include E49 and D60.

The protein belongs to the TrpA family. Tetramer of two alpha and two beta chains.

It catalyses the reaction (1S,2R)-1-C-(indol-3-yl)glycerol 3-phosphate + L-serine = D-glyceraldehyde 3-phosphate + L-tryptophan + H2O. The protein operates within amino-acid biosynthesis; L-tryptophan biosynthesis; L-tryptophan from chorismate: step 5/5. Its function is as follows. The alpha subunit is responsible for the aldol cleavage of indoleglycerol phosphate to indole and glyceraldehyde 3-phosphate. In Aeromonas hydrophila subsp. hydrophila (strain ATCC 7966 / DSM 30187 / BCRC 13018 / CCUG 14551 / JCM 1027 / KCTC 2358 / NCIMB 9240 / NCTC 8049), this protein is Tryptophan synthase alpha chain.